A 63-amino-acid polypeptide reads, in one-letter code: Translational regulator CsrA (63 aa).

The protein belongs to the CsrA/RsmA family. Homodimer; the beta-strands of each monomer intercalate to form a hydrophobic core, while the alpha-helices form wings that extend away from the core.

The protein localises to the cytoplasm. Functionally, a key translational regulator that binds mRNA to regulate translation initiation and/or mRNA stability. Mediates global changes in gene expression, shifting from rapid growth to stress survival by linking envelope stress, the stringent response and the catabolite repression systems. Usually binds in the 5'-UTR; binding at or near the Shine-Dalgarno sequence prevents ribosome-binding, repressing translation, binding elsewhere in the 5'-UTR can activate translation and/or stabilize the mRNA. Its function is antagonized by small RNA(s). This is Translational regulator CsrA from Alteromonas mediterranea (strain DSM 17117 / CIP 110805 / LMG 28347 / Deep ecotype).